The sequence spans 308 residues: Ornithine carbamoyltransferase (308 aa).

Carbamoyl phosphate is bound by residues 57–60 (STRT), Gln-84, Arg-108, and 135–138 (HPCQ). Residues Asn-166, Asp-224, and 228 to 229 (SM) each bind L-ornithine. Residues 264-265 (CL) and Arg-292 contribute to the carbamoyl phosphate site.

The protein belongs to the aspartate/ornithine carbamoyltransferase superfamily. OTCase family.

The protein resides in the cytoplasm. The enzyme catalyses carbamoyl phosphate + L-ornithine = L-citrulline + phosphate + H(+). The protein operates within amino-acid degradation; L-arginine degradation via ADI pathway; carbamoyl phosphate from L-arginine: step 2/2. Reversibly catalyzes the transfer of the carbamoyl group from carbamoyl phosphate (CP) to the N(epsilon) atom of ornithine (ORN) to produce L-citrulline. The chain is Ornithine carbamoyltransferase from Ralstonia pickettii (strain 12J).